Here is a 238-residue protein sequence, read N- to C-terminus: Sugar fermentation stimulation protein homolog (238 aa).

This sequence belongs to the SfsA family.

In Klebsiella pneumoniae (strain 342), this protein is Sugar fermentation stimulation protein homolog.